We begin with the raw amino-acid sequence, 442 residues long: Tubulin beta chain (442 aa).

GTP contacts are provided by Q11, E69, S138, G142, T143, G144, N204, and N226. E69 contributes to the Mg(2+) binding site.

This sequence belongs to the tubulin family. As to quaternary structure, dimer of alpha and beta chains. A typical microtubule is a hollow water-filled tube with an outer diameter of 25 nm and an inner diameter of 15 nM. Alpha-beta heterodimers associate head-to-tail to form protofilaments running lengthwise along the microtubule wall with the beta-tubulin subunit facing the microtubule plus end conferring a structural polarity. Microtubules usually have 13 protofilaments but different protofilament numbers can be found in some organisms and specialized cells. Requires Mg(2+) as cofactor.

It localises to the cytoplasm. Its subcellular location is the cytoskeleton. Its function is as follows. Tubulin is the major constituent of microtubules, a cylinder consisting of laterally associated linear protofilaments composed of alpha- and beta-tubulin heterodimers. Microtubules grow by the addition of GTP-tubulin dimers to the microtubule end, where a stabilizing cap forms. Below the cap, tubulin dimers are in GDP-bound state, owing to GTPase activity of alpha-tubulin. The protein is Tubulin beta chain of Trypanosoma cruzi.